A 192-amino-acid polypeptide reads, in one-letter code: Casparian strip membrane protein 4 (192 aa).

Residues 1–29 (MTKDVVIEHGESSKAPLVPAPVAAGVGRA) are Cytoplasmic-facing. The chain crosses the membrane as a helical span at residues 30 to 50 (VSIADVFLRFLSIVATIASAI). Topologically, residues 51–79 (SMGTTNETLPFFTQFIQFEAKYSDLPSFT) are extracellular. A glycan (N-linked (GlcNAc...) asparagine) is linked at asparagine 56. A helical transmembrane segment spans residues 80–100 (FFVAANAVVCTYLVLSIPLSI). Topologically, residues 101–112 (VHIIRPRARYSR) are cytoplasmic. Residues 113 to 133 (LILVFFDAVMLALLTAGASAA) form a helical membrane-spanning segment. Residues 134-166 (AAIVYLAHKGNVRANWFAICQQFDSFCERISGS) lie on the Extracellular side of the membrane. Residues 167–187 (LIGSFAAMVLLIVLIFLSAFA) form a helical membrane-spanning segment. The Cytoplasmic segment spans residues 188–192 (LARRH).

This sequence belongs to the Casparian strip membrane proteins (CASP) family. In terms of assembly, homodimer and heterodimers.

The protein resides in the cell membrane. In terms of biological role, regulates membrane-cell wall junctions and localized cell wall deposition. Required for establishment of the Casparian strip membrane domain (CSD) and the subsequent formation of Casparian strips, a cell wall modification of the root endodermis that determines an apoplastic barrier between the intraorganismal apoplasm and the extraorganismal apoplasm and prevents lateral diffusion. This Sorghum bicolor (Sorghum) protein is Casparian strip membrane protein 4.